Consider the following 126-residue polypeptide: Large ribosomal subunit protein bL19 (126 aa).

It belongs to the bacterial ribosomal protein bL19 family.

Its function is as follows. This protein is located at the 30S-50S ribosomal subunit interface and may play a role in the structure and function of the aminoacyl-tRNA binding site. This chain is Large ribosomal subunit protein bL19, found in Gluconacetobacter diazotrophicus (strain ATCC 49037 / DSM 5601 / CCUG 37298 / CIP 103539 / LMG 7603 / PAl5).